The sequence spans 239 residues: Geranylgeranylglyceryl phosphate synthase (239 aa).

Residues aspartate 18 and serine 45 each coordinate Mg(2+). Sn-glycerol 1-phosphate contacts are provided by residues 166–172 (YLEAGSG), 197–198 (GG), and 219–220 (GT).

Belongs to the GGGP/HepGP synthase family. Group II subfamily. The cofactor is Mg(2+).

The protein resides in the cytoplasm. The catalysed reaction is sn-glycerol 1-phosphate + (2E,6E,10E)-geranylgeranyl diphosphate = sn-3-O-(geranylgeranyl)glycerol 1-phosphate + diphosphate. The protein operates within membrane lipid metabolism; glycerophospholipid metabolism. Prenyltransferase that catalyzes the transfer of the geranylgeranyl moiety of geranylgeranyl diphosphate (GGPP) to the C3 hydroxyl of sn-glycerol-1-phosphate (G1P). This reaction is the first ether-bond-formation step in the biosynthesis of archaeal membrane lipids. The protein is Geranylgeranylglyceryl phosphate synthase of Pyrobaculum aerophilum (strain ATCC 51768 / DSM 7523 / JCM 9630 / CIP 104966 / NBRC 100827 / IM2).